Reading from the N-terminus, the 269-residue chain is Diaminopimelate epimerase (269 aa).

The substrate site is built by N20 and N63. C72 (proton donor) is an active-site residue. Substrate-binding positions include 73-74 (GN), N179, and 197-198 (ER). The Proton acceptor role is filled by C207. Substrate is bound at residue 208–209 (GT).

This sequence belongs to the diaminopimelate epimerase family. Homodimer.

The protein resides in the cytoplasm. It catalyses the reaction (2S,6S)-2,6-diaminopimelate = meso-2,6-diaminopimelate. It functions in the pathway amino-acid biosynthesis; L-lysine biosynthesis via DAP pathway; DL-2,6-diaminopimelate from LL-2,6-diaminopimelate: step 1/1. Functionally, catalyzes the stereoinversion of LL-2,6-diaminopimelate (L,L-DAP) to meso-diaminopimelate (meso-DAP), a precursor of L-lysine and an essential component of the bacterial peptidoglycan. This chain is Diaminopimelate epimerase, found in Chlamydia muridarum (strain MoPn / Nigg).